We begin with the raw amino-acid sequence, 226 residues long: Small ribosomal subunit protein uS5 (226 aa).

Positions 1–18 are enriched in polar residues; that stretch reads MAAPQRSRTTGAPSSGGP. The disordered stretch occupies residues 1–45; the sequence is MAAPQRSRTTGAPSSGGPSENERGRGGDRRGGDRRGGDRRGGDDR. Over residues 20–45 the composition is skewed to basic and acidic residues; sequence ENERGRGGDRRGGDRRGGDRRGGDDR. The S5 DRBM domain maps to 48–111; it reads FVERVVTINR…EEAKKNFFRV (64 aa).

It belongs to the universal ribosomal protein uS5 family. As to quaternary structure, part of the 30S ribosomal subunit. Contacts proteins S4 and S8.

In terms of biological role, with S4 and S12 plays an important role in translational accuracy. Its function is as follows. Located at the back of the 30S subunit body where it stabilizes the conformation of the head with respect to the body. In Beutenbergia cavernae (strain ATCC BAA-8 / DSM 12333 / CCUG 43141 / JCM 11478 / NBRC 16432 / NCIMB 13614 / HKI 0122), this protein is Small ribosomal subunit protein uS5.